The sequence spans 198 residues: Nucleoid occlusion factor SlmA (198 aa).

The HTH tetR-type domain occupies 10-70; sequence NRREEILQSL…SLIEFIEDSL (61 aa). Residues 33-52 constitute a DNA-binding region (H-T-H motif); sequence TTAKLAASVGVSEAALYRHF. Residues 117–145 are a coiled coil; that stretch reads EQDKLQGRINQLFERIEAQLRQVLREKKM.

The protein belongs to the nucleoid occlusion factor SlmA family. In terms of assembly, homodimer. Interacts with FtsZ.

It localises to the cytoplasm. Its subcellular location is the nucleoid. In terms of biological role, required for nucleoid occlusion (NO) phenomenon, which prevents Z-ring formation and cell division over the nucleoid. Acts as a DNA-associated cell division inhibitor that binds simultaneously chromosomal DNA and FtsZ, and disrupts the assembly of FtsZ polymers. SlmA-DNA-binding sequences (SBS) are dispersed on non-Ter regions of the chromosome, preventing FtsZ polymerization at these regions. This chain is Nucleoid occlusion factor SlmA, found in Enterobacter sp. (strain 638).